The chain runs to 152 residues: Large ribosomal subunit protein eL29 (152 aa).

The segment covering Met1–Ser26 has biased composition (basic residues). A disordered region spans residues Met1–Leu32. Lys5 is subject to N6-methyllysine. Ser31 is subject to Phosphoserine. The residue at position 33 (Lys33) is an N6-acetyllysine. The segment at Cys119–Glu152 is disordered. Positions Pro121 to Glu152 are enriched in low complexity.

It belongs to the eukaryotic ribosomal protein eL29 family. As to quaternary structure, component of the large ribosomal subunit.

It is found in the cytoplasm. Its function is as follows. Component of the large ribosomal subunit. The ribosome is a large ribonucleoprotein complex responsible for the synthesis of proteins in the cell. The protein is Large ribosomal subunit protein eL29 (RPL29) of Bos taurus (Bovine).